Consider the following 77-residue polypeptide: U8-lycotoxin-Ls1v (77 aa).

The first 20 residues, 1–20 (MKLIIFTGLVLFGIVSLIEA), serve as a signal peptide directing secretion. Residues 21–26 (QAENEK) constitute a propeptide that is removed on maturation.

It belongs to the neurotoxin 19 (CSTX) family. 08 (U8-Lctx) subfamily. Post-translationally, contains 4 disulfide bonds. Expressed by the venom gland.

Its subcellular location is the secreted. This Lycosa singoriensis (Wolf spider) protein is U8-lycotoxin-Ls1v.